The sequence spans 150 residues: Transcriptional regulator MraZ (150 aa).

SpoVT-AbrB domains are found at residues 7–55 (SHAI…PEPE) and 84–127 (AALM…SEES).

Belongs to the MraZ family. Forms oligomers.

The protein localises to the cytoplasm. It is found in the nucleoid. This is Transcriptional regulator MraZ from Marinobacter nauticus (strain ATCC 700491 / DSM 11845 / VT8) (Marinobacter aquaeolei).